A 188-amino-acid polypeptide reads, in one-letter code: UPF0398 protein BBR47_29830 (188 aa).

It belongs to the UPF0398 family.

The protein is UPF0398 protein BBR47_29830 of Brevibacillus brevis (strain 47 / JCM 6285 / NBRC 100599).